The following is a 2543-amino-acid chain: Highly reducing polyketide synthase PKS2 (2543 aa).

Residues 4 to 425 (EPRIAVIGLS…GSNSAILLEG (422 aa)) enclose the Ketosynthase family 3 (KS3) domain. Catalysis depends on for beta-ketoacyl synthase activity residues cysteine 174, histidine 309, and histidine 349. The tract at residues 573 to 902 (VFTGQGAQHA…TYLPTLFRGT (330 aa)) is malonyl-CoA:ACP transacylase (MAT) domain. The active-site For malonyltransferase activity is serine 662. The tract at residues 969 to 1101 (HPLLGRKISP…GQIEAEMTDM (133 aa)) is N-terminal hotdog fold. In terms of domain architecture, PKS/mFAS DH spans 969–1281 (HPLLGRKISP…FRNIGSAEEV (313 aa)). The dehydratase (DH) domain stretch occupies residues 969–1283 (HPLLGRKISP…NIGSAEEVID (315 aa)). Histidine 1001 (proton acceptor; for dehydratase activity) is an active-site residue. The tract at residues 1119 to 1281 (TGLKEHDINA…FRNIGSAEEV (163 aa)) is C-terminal hotdog fold. The active-site Proton donor; for dehydratase activity is the aspartate 1188. The segment at 1438–1631 (SKVLGYLTEY…LPSRYGTDKP (194 aa)) is methyltransferase (CMet) domain. Residues 1847–2159 (GSPDTIYFQR…SGEHMGKMVI (313 aa)) form an enoylreductase (ER) domain region. The tract at residues 2184 to 2359 (ATYLVAGGTR…YTVSIALPVV (176 aa)) is ketoreductase (KR) domain. A Carrier domain is found at 2463–2540 (DPLIGLTEAM…ALATEILSQR (78 aa)). At serine 2500 the chain carries O-(pantetheine 4'-phosphoryl)serine.

It participates in secondary metabolite biosynthesis. Functionally, highly reducing polyketide synthase; part of the gene cluster that mediates the biosynthesis of phomenoic acid, a long chain aliphatic carboxylic acid that does not appear to be essential for pathogenicity but may play a role in allowing to outcompete other fungi in the environmental niche via its antifungal properties. The polyketide synthase produces the long methylated aliphatic carboxylic acid chain of phomenoic acid. The cluster-specific cytochrome P450 monooxygenase may then hydroxylate the methyl group of carbon 31. The putative dehydrogenase YogA, which has no obvious role in phomenoic acid biosynthesis, may further modify phomenoic acid to produce a compound not identified yet. The protein is Highly reducing polyketide synthase PKS2 of Leptosphaeria maculans (strain JN3 / isolate v23.1.3 / race Av1-4-5-6-7-8) (Blackleg fungus).